The sequence spans 653 residues: Mannosyl-oligosaccharide 1,2-alpha-mannosidase IA (653 aa).

The Cytoplasmic portion of the chain corresponds to 1–41 (MPVGGLLPLFSSPAGGVLGGGLGGGGGRKGSGPAALRLTEK). Residues 42–62 (FVLLLVFSAFITLCFGAIFFL) traverse the membrane as a helical; Signal-anchor for type II membrane protein segment. Topologically, residues 63–653 (PDSSKLLSGV…DKKEVEIREE (591 aa)) are lumenal. A disordered region spans residues 81–116 (QPAADHKPGPGARAEDAAEGRARRREEGAPGDPEAA). A compositionally biased stretch (basic and acidic residues) spans 84–108 (ADHKPGPGARAEDAAEGRARRREEG). A disulfide bond links C476 and C508. N-linked (GlcNAc...) asparagine glycosylation occurs at N513. The Proton donor role is filled by E522.

The protein belongs to the glycosyl hydrolase 47 family. Ca(2+) is required as a cofactor.

It is found in the golgi apparatus membrane. It catalyses the reaction N(4)-(alpha-D-Man-(1-&gt;2)-alpha-D-Man-(1-&gt;2)-alpha-D-Man-(1-&gt;3)-[alpha-D-Man-(1-&gt;2)-alpha-D-Man-(1-&gt;3)-[alpha-D-Man-(1-&gt;2)-alpha-D-Man-(1-&gt;6)]-alpha-D-Man-(1-&gt;6)]-beta-D-Man-(1-&gt;4)-beta-D-GlcNAc-(1-&gt;4)-beta-D-GlcNAc)-L-asparaginyl-[protein] (N-glucan mannose isomer 9A1,2,3B1,2,3) + 4 H2O = N(4)-(alpha-D-Man-(1-&gt;3)-[alpha-D-Man-(1-&gt;3)-[alpha-D-Man-(1-&gt;6)]-alpha-D-Man-(1-&gt;6)]-beta-D-Man-(1-&gt;4)-beta-D-GlcNAc-(1-&gt;4)-beta-D-GlcNAc)-L-asparaginyl-[protein] (N-glucan mannose isomer 5A1,2) + 4 beta-D-mannose. The enzyme catalyses N(4)-(alpha-D-Man-(1-&gt;2)-alpha-D-Man-(1-&gt;2)-alpha-D-Man-(1-&gt;3)-[alpha-D-Man-(1-&gt;3)-[alpha-D-Man-(1-&gt;2)-alpha-D-Man-(1-&gt;6)]-alpha-D-Man-(1-&gt;6)]-beta-D-Man-(1-&gt;4)-beta-D-GlcNAc-(1-&gt;4)-beta-D-GlcNAc)-L-asparaginyl-[protein] (N-glucan mannose isomer 8A1,2,3B1,3) + 3 H2O = N(4)-(alpha-D-Man-(1-&gt;3)-[alpha-D-Man-(1-&gt;3)-[alpha-D-Man-(1-&gt;6)]-alpha-D-Man-(1-&gt;6)]-beta-D-Man-(1-&gt;4)-beta-D-GlcNAc-(1-&gt;4)-beta-D-GlcNAc)-L-asparaginyl-[protein] (N-glucan mannose isomer 5A1,2) + 3 beta-D-mannose. The protein operates within protein modification; protein glycosylation. Inhibited by both 1-deoxymannojirimycin and kifunensine. Its function is as follows. Involved in the maturation of Asn-linked oligosaccharides. Progressively trim alpha-1,2-linked mannose residues from Man(9)GlcNAc(2) to produce Man(5)GlcNAc(2). The sequence is that of Mannosyl-oligosaccharide 1,2-alpha-mannosidase IA (MAN1A1) from Homo sapiens (Human).